The following is a 150-amino-acid chain: Urease accessory protein UreE (150 aa).

Belongs to the UreE family.

It is found in the cytoplasm. Functionally, involved in urease metallocenter assembly. Binds nickel. Probably functions as a nickel donor during metallocenter assembly. The sequence is that of Urease accessory protein UreE from Staphylococcus carnosus (strain TM300).